The primary structure comprises 107 residues: Protein Rev (107 aa).

S5 and S8 each carry phosphoserine; by host CK2. The segment at 18–26 (IIKILYQSN) is homomultimerization. Disordered stretches follow at residues 26–48 (NPYPTPEGTRQARRNRRRRWRAR) and 81–107 (LNLDCSEDSGTSGTQQSQGTTEGVGNP). A Nuclear localization signal and RNA-binding (RRE) motif is present at residues 34 to 50 (TRQARRNRRRRWRARQR). The segment covering 36–48 (QARRNRRRRWRAR) has biased composition (basic residues). A Nuclear export signal and binding to XPO1 motif is present at residues 73-84 (LQLPPLERLNLD). A compositionally biased stretch (low complexity) spans 89-101 (SGTSGTQQSQGTT). A Phosphoserine; by host modification is found at S92.

Belongs to the HIV-1 REV protein family. In terms of assembly, homomultimer; when bound to the RRE. Multimeric assembly is essential for activity and may involve XPO1. Binds to human KPNB1, XPO1, TNPO1, RANBP5 and IPO7. Interacts with the viral Integrase. Interacts with human KHDRBS1. Interacts with human NAP1; this interaction decreases Rev multimerization and stimulates its activity. Interacts with human DEAD-box helicases DDX3 and DDX24; these interactions may serve for viral RNA export to the cytoplasm and packaging, respectively. Interacts with human PSIP1; this interaction may inhibit HIV-1 DNA integration by promoting dissociation of the Integrase-LEDGF/p75 complex. Post-translationally, asymmetrically arginine dimethylated at one site by host PRMT6. Methylation impairs the RNA-binding activity and export of viral RNA from the nucleus to the cytoplasm. Phosphorylated by protein kinase CK2. Presence of, and maybe binding to the N-terminus of the regulatory beta subunit of CK2 is necessary for CK2-mediated Rev's phosphorylation.

The protein localises to the host nucleus. It is found in the host nucleolus. Its subcellular location is the host cytoplasm. In terms of biological role, escorts unspliced or incompletely spliced viral pre-mRNAs (late transcripts) out of the nucleus of infected cells. These pre-mRNAs carry a recognition sequence called Rev responsive element (RRE) located in the env gene, that is not present in fully spliced viral mRNAs (early transcripts). This function is essential since most viral proteins are translated from unspliced or partially spliced pre-mRNAs which cannot exit the nucleus by the pathway used by fully processed cellular mRNAs. Rev itself is translated from a fully spliced mRNA that readily exits the nucleus. Rev's nuclear localization signal (NLS) binds directly to KPNB1/Importin beta-1 without previous binding to KPNA1/Importin alpha-1. KPNB1 binds to the GDP bound form of RAN (Ran-GDP) and targets Rev to the nucleus. In the nucleus, the conversion from Ran-GDP to Ran-GTP dissociates Rev from KPNB1 and allows Rev's binding to the RRE in viral pre-mRNAs. Rev multimerization on the RRE via cooperative assembly exposes its nuclear export signal (NES) to the surface. Rev can then form a complex with XPO1/CRM1 and Ran-GTP, leading to nuclear export of the complex. Conversion from Ran-GTP to Ran-GDP mediates dissociation of the Rev/RRE/XPO1/RAN complex, so that Rev can return to the nucleus for a subsequent round of export. Beside KPNB1, also seems to interact with TNPO1/Transportin-1, RANBP5/IPO5 and IPO7/RANBP7 for nuclear import. The nucleoporin-like HRB/RIP is an essential cofactor that probably indirectly interacts with Rev to release HIV RNAs from the perinuclear region to the cytoplasm. This is Protein Rev from Homo sapiens (Human).